Reading from the N-terminus, the 184-residue chain is Adenine phosphoribosyltransferase (184 aa).

The protein belongs to the purine/pyrimidine phosphoribosyltransferase family. In terms of assembly, homodimer.

It localises to the cytoplasm. It catalyses the reaction AMP + diphosphate = 5-phospho-alpha-D-ribose 1-diphosphate + adenine. Its pathway is purine metabolism; AMP biosynthesis via salvage pathway; AMP from adenine: step 1/1. Its function is as follows. Catalyzes a salvage reaction resulting in the formation of AMP, that is energically less costly than de novo synthesis. In Corynebacterium diphtheriae (strain ATCC 700971 / NCTC 13129 / Biotype gravis), this protein is Adenine phosphoribosyltransferase.